Reading from the N-terminus, the 222-residue chain is Putative thymidylate synthase (222 aa).

Cysteine 139 is an active-site residue.

Belongs to the thymidylate synthase family. Archaeal-type ThyA subfamily. As to quaternary structure, monomer.

Its subcellular location is the cytoplasm. It participates in pyrimidine metabolism; dTTP biosynthesis. May catalyze the biosynthesis of dTMP using an unknown cosubstrate. This chain is Putative thymidylate synthase, found in Methanocaldococcus jannaschii (strain ATCC 43067 / DSM 2661 / JAL-1 / JCM 10045 / NBRC 100440) (Methanococcus jannaschii).